Reading from the N-terminus, the 479-residue chain is Glutamate--tRNA ligase (479 aa).

Residues 21–31 (PSPTGYLHVGG) carry the 'HIGH' region motif. Residues 248 to 252 (KLSKR) carry the 'KMSKS' region motif. Lys251 contributes to the ATP binding site.

Belongs to the class-I aminoacyl-tRNA synthetase family. Glutamate--tRNA ligase type 1 subfamily. As to quaternary structure, monomer.

It is found in the cytoplasm. The enzyme catalyses tRNA(Glu) + L-glutamate + ATP = L-glutamyl-tRNA(Glu) + AMP + diphosphate. Functionally, catalyzes the attachment of glutamate to tRNA(Glu) in a two-step reaction: glutamate is first activated by ATP to form Glu-AMP and then transferred to the acceptor end of tRNA(Glu). The protein is Glutamate--tRNA ligase of Haemophilus ducreyi (strain 35000HP / ATCC 700724).